Reading from the N-terminus, the 901-residue chain is HTH-type transcriptional regulator MalT (901 aa).

39–46 (SPAGYGKT) serves as a coordination point for ATP. Residues 829–894 (ELIRTSPLTQ…DAVQHAQQLL (66 aa)) enclose the HTH luxR-type domain. Positions 853 to 872 (NEQIAGELAVAATTIKTHIR) form a DNA-binding region, H-T-H motif.

This sequence belongs to the MalT family. In terms of assembly, monomer in solution. Oligomerizes to an active state in the presence of the positive effectors ATP and maltotriose.

Its activity is regulated as follows. Activated by ATP and maltotriose, which are both required for DNA binding. Positively regulates the transcription of the maltose regulon whose gene products are responsible for uptake and catabolism of malto-oligosaccharides. Specifically binds to the promoter region of its target genes, recognizing a short DNA motif called the MalT box. This chain is HTH-type transcriptional regulator MalT, found in Enterobacter sp. (strain 638).